The following is a 66-amino-acid chain: Large ribosomal subunit protein uL29 (66 aa).

Belongs to the universal ribosomal protein uL29 family.

The protein is Large ribosomal subunit protein uL29 of Chelativorans sp. (strain BNC1).